The primary structure comprises 203 residues: Small ribosomal subunit protein uS4c (203 aa).

The tract at residues 15–42 (LGALPGLTSKRPRAGSDPRNQELSGNKS) is disordered. Residues 89-150 (MRLDNILFRL…DQKSKAMIQN (62 aa)) form the S4 RNA-binding domain.

It belongs to the universal ribosomal protein uS4 family. As to quaternary structure, part of the 30S ribosomal subunit. Contacts protein S5. The interaction surface between S4 and S5 is involved in control of translational fidelity.

The protein resides in the plastid. The protein localises to the chloroplast. One of the primary rRNA binding proteins, it binds directly to 16S rRNA where it nucleates assembly of the body of the 30S subunit. In terms of biological role, with S5 and S12 plays an important role in translational accuracy. This is Small ribosomal subunit protein uS4c (rps4) from Oenothera elata subsp. hookeri (Hooker's evening primrose).